A 352-amino-acid polypeptide reads, in one-letter code: MAMAALTSSSSAITLLNKPFLPNRSSFFSSDSQSPLLRFSASTSVRSRFPSAAISAVAPKSDINKNETPKIEIEETQVFACPVCYEPLMRKGPSGINLQAIYRSGFKCGQCNKTYSSKDEYLDLTVTADLDDYNEVKPITTELFRSPLVSFLYERGWRQAFKRSGFPGPDEEFRMAEEYFKEAEGGLLVDVSCGSGLFSRKFAQSGKYSGVIALDYSENMLRQCKEFIKNDNTFDNSTNIAVVRADVSRLPFPSGSVDAVHAGAALHCWPSPTNAIAEICRVLRSGGVFVGTTFLRYSPSTPWIIRPFQSRILQSYNYLMQDEIKDVCTSCGLTDYEDYIQDSFIMFTARKP.

Residues 1–55 (MAMAALTSSSSAITLLNKPFLPNRSSFFSSDSQSPLLRFSASTSVRSRFPSAAIS) constitute a chloroplast transit peptide.

The protein belongs to the methyltransferase superfamily.

It localises to the plastid. It is found in the chloroplast. The protein resides in the plastoglobule. This is an uncharacterized protein from Arabidopsis thaliana (Mouse-ear cress).